Reading from the N-terminus, the 150-residue chain is MEVILLDKIAKLGGLGDKVSVKSGYARNYLLPQGKAVFASEANVEHFEARRADIEAKLADVLATAEARAAKVVALAEVTIASKSGDEGKLFGSIGTRDIADAITEAGVEITKAEVRLPLGAIRETGEFEIAIHLHHDVDTSIKVVVIAEA.

Belongs to the bacterial ribosomal protein bL9 family.

Binds to the 23S rRNA. In Colwellia psychrerythraea (strain 34H / ATCC BAA-681) (Vibrio psychroerythus), this protein is Large ribosomal subunit protein bL9.